The chain runs to 336 residues: ATP-dependent 6-phosphofructokinase (336 aa).

Gly11 lines the ATP pocket. ADP is bound at residue Arg21 to Arg25. Residues Arg72–Tyr73 and Gly102–Ser105 each bind ATP. Asp103 lines the Mg(2+) pocket. Substrate is bound at residue Thr125–Asp127. Asp127 acts as the Proton acceptor in catalysis. Arg154 contacts ADP. Residues Arg162 and Met169 to Arg171 contribute to the substrate site. ADP is bound by residues Gly185 to Asp187, Lys211, and Lys213 to His215. Substrate contacts are provided by residues Glu222, Arg244, and His250 to Arg253.

The protein belongs to the phosphofructokinase type A (PFKA) family. ATP-dependent PFK group I subfamily. Prokaryotic clade 'B1' sub-subfamily. In terms of assembly, homotetramer. The cofactor is Mg(2+).

The protein resides in the cytoplasm. It catalyses the reaction beta-D-fructose 6-phosphate + ATP = beta-D-fructose 1,6-bisphosphate + ADP + H(+). The protein operates within carbohydrate degradation; glycolysis; D-glyceraldehyde 3-phosphate and glycerone phosphate from D-glucose: step 3/4. Its activity is regulated as follows. Allosterically activated by ADP and other diphosphonucleosides, and allosterically inhibited by phosphoenolpyruvate. Catalyzes the phosphorylation of D-fructose 6-phosphate to fructose 1,6-bisphosphate by ATP, the first committing step of glycolysis. The polypeptide is ATP-dependent 6-phosphofructokinase (Streptococcus sanguinis (strain SK36)).